A 1441-amino-acid polypeptide reads, in one-letter code: ABC transporter G family member 51 (1441 aa).

The tract at residues 52–71 (VLPDPDGLGGGDGGGRGEGQ) is disordered. Gly residues predominate over residues 58-69 (GLGGGDGGGRGE). Residues 154–428 (LISSHLLRPD…FKSLGFSLPP (275 aa)) form the ABC transporter 1 domain. 187–194 (GPPASGKS) serves as a coordination point for ATP. Positions 505–718 (SLVRACFARE…AQRAVSVNEF (214 aa)) constitute an ABC transmembrane type-2 1 domain. 6 consecutive transmembrane segments (helical) span residues 523–543 (FLYT…STLF), 558–578 (LYLA…FTEM), 615–635 (FIEA…APTV), 642–662 (MLLL…MGAI), 668–688 (IAST…GFVV), and 751–771 (FWIG…MFTL). Positions 838–1090 (MTFHNVNYYV…DMINYFQGIP (253 aa)) constitute an ABC transporter 2 domain. ATP is bound at residue 883-890 (GASGSGKT). An ABC transmembrane type-2 2 domain is found at 1163 to 1380 (TQFMVCLRKQ…TLRGVITSQL (218 aa)). 7 helical membrane-spanning segments follow: residues 1184-1204 (VVRL…FWNV), 1214-1234 (ILLL…NNAS), 1271-1291 (VEIP…YFMV), 1300-1320 (LVLY…YGMV), 1330-1350 (MASV…GFLI), 1355-1375 (IPGW…LRGV), and 1413-1433 (ATVA…AISI).

This sequence belongs to the ABC transporter superfamily. ABCG family. PDR (TC 3.A.1.205) subfamily.

It localises to the membrane. Functionally, may be a general defense protein. The sequence is that of ABC transporter G family member 51 from Oryza sativa subsp. japonica (Rice).